The primary structure comprises 406 residues: Cysteine desulfurase (406 aa).

The residue at position 226 (Lys-226) is an N6-(pyridoxal phosphate)lysine. Cys-364 serves as the catalytic Cysteine persulfide intermediate.

It belongs to the class-V pyridoxal-phosphate-dependent aminotransferase family. Csd subfamily. Homodimer. Interacts with SufE and the SufBCD complex composed of SufB, SufC and SufD. The interaction with SufE is required to mediate the direct transfer of the sulfur atom from the S-sulfanylcysteine. Pyridoxal 5'-phosphate is required as a cofactor.

The protein localises to the cytoplasm. It carries out the reaction (sulfur carrier)-H + L-cysteine = (sulfur carrier)-SH + L-alanine. The catalysed reaction is L-selenocysteine + AH2 = hydrogenselenide + L-alanine + A + H(+). Its pathway is cofactor biosynthesis; iron-sulfur cluster biosynthesis. Its function is as follows. Cysteine desulfurases mobilize the sulfur from L-cysteine to yield L-alanine, an essential step in sulfur metabolism for biosynthesis of a variety of sulfur-containing biomolecules. Component of the suf operon, which is activated and required under specific conditions such as oxidative stress and iron limitation. Acts as a potent selenocysteine lyase in vitro, that mobilizes selenium from L-selenocysteine. Selenocysteine lyase activity is however unsure in vivo. The chain is Cysteine desulfurase from Escherichia coli (strain K12 / MC4100 / BW2952).